A 403-amino-acid chain; its full sequence is uncharacterized protein (403 aa).

A run of 2 helical transmembrane segments spans residues 29–49 (FVIFSVLFSLIIGFIASCGFL) and 55–75 (AFIASGLCFALLVSVVSFFGC).

This sequence belongs to the chlamydial CPn_0129/CT_036/TC_0306 family.

The protein localises to the cell membrane. This is an uncharacterized protein from Chlamydia trachomatis serovar D (strain ATCC VR-885 / DSM 19411 / UW-3/Cx).